The chain runs to 313 residues: Ribosomal RNA small subunit methyltransferase H (313 aa).

S-adenosyl-L-methionine is bound by residues 35–37 (GGH), Asp-55, Phe-81, Asp-103, and Gln-110.

Belongs to the methyltransferase superfamily. RsmH family.

It localises to the cytoplasm. It carries out the reaction cytidine(1402) in 16S rRNA + S-adenosyl-L-methionine = N(4)-methylcytidine(1402) in 16S rRNA + S-adenosyl-L-homocysteine + H(+). In terms of biological role, specifically methylates the N4 position of cytidine in position 1402 (C1402) of 16S rRNA. In Pseudomonas aeruginosa (strain ATCC 15692 / DSM 22644 / CIP 104116 / JCM 14847 / LMG 12228 / 1C / PRS 101 / PAO1), this protein is Ribosomal RNA small subunit methyltransferase H.